Consider the following 61-residue polypeptide: Small ribosomal subunit protein uS14 (61 aa).

Residues C24, C27, C40, and C43 each coordinate Zn(2+).

This sequence belongs to the universal ribosomal protein uS14 family. Zinc-binding uS14 subfamily. Part of the 30S ribosomal subunit. Contacts proteins S3 and S10. Zn(2+) serves as cofactor.

Its function is as follows. Binds 16S rRNA, required for the assembly of 30S particles and may also be responsible for determining the conformation of the 16S rRNA at the A site. The sequence is that of Small ribosomal subunit protein uS14 from Nitratidesulfovibrio vulgaris (strain ATCC 29579 / DSM 644 / CCUG 34227 / NCIMB 8303 / VKM B-1760 / Hildenborough) (Desulfovibrio vulgaris).